We begin with the raw amino-acid sequence, 359 residues long: tRNA-specific 2-thiouridylase MnmA (359 aa).

Residues 6–13 (AMSGGVDS) and L32 each bind ATP. C97 functions as the Nucleophile in the catalytic mechanism. C97 and C195 form a disulfide bridge. G121 lines the ATP pocket. Positions 144 to 146 (KDQ) are interaction with tRNA. The active-site Cysteine persulfide intermediate is the C195.

It belongs to the MnmA/TRMU family.

The protein localises to the cytoplasm. It carries out the reaction S-sulfanyl-L-cysteinyl-[protein] + uridine(34) in tRNA + AH2 + ATP = 2-thiouridine(34) in tRNA + L-cysteinyl-[protein] + A + AMP + diphosphate + H(+). In terms of biological role, catalyzes the 2-thiolation of uridine at the wobble position (U34) of tRNA, leading to the formation of s(2)U34. The sequence is that of tRNA-specific 2-thiouridylase MnmA from Tropheryma whipplei (strain TW08/27) (Whipple's bacillus).